The chain runs to 116 residues: Ribonuclease P protein component (116 aa).

The protein belongs to the RnpA family. As to quaternary structure, consists of a catalytic RNA component (M1 or rnpB) and a protein subunit.

It catalyses the reaction Endonucleolytic cleavage of RNA, removing 5'-extranucleotides from tRNA precursor.. Its function is as follows. RNaseP catalyzes the removal of the 5'-leader sequence from pre-tRNA to produce the mature 5'-terminus. It can also cleave other RNA substrates such as 4.5S RNA. The protein component plays an auxiliary but essential role in vivo by binding to the 5'-leader sequence and broadening the substrate specificity of the ribozyme. The protein is Ribonuclease P protein component of Leuconostoc mesenteroides subsp. mesenteroides (strain ATCC 8293 / DSM 20343 / BCRC 11652 / CCM 1803 / JCM 6124 / NCDO 523 / NBRC 100496 / NCIMB 8023 / NCTC 12954 / NRRL B-1118 / 37Y).